Consider the following 64-residue polypeptide: Large ribosomal subunit protein bL28 (64 aa).

This sequence belongs to the bacterial ribosomal protein bL28 family.

This chain is Large ribosomal subunit protein bL28, found in Desulfotalea psychrophila (strain LSv54 / DSM 12343).